We begin with the raw amino-acid sequence, 519 residues long: MEGVLYKWTNYLSGWQPRWFLLCGGILSYYDSPEDAWKGCKGSIQMAVCEIQVHSVDNTRMDLIIPGEQYFYLKARSVAERQRWLVALGSAKACLTDSRTQKEKEFAENTENLKTKMSELRLYCDLLVQQVDKTKEVTTTGVSNSEEGIDVGTLLKSTCNTFLKTLEECMQIANAAFTSELLYRTPPGSPQLAMLKSSKMKHPIIPIHNSLERQMELNSCENGSLHMEINDGEEILMKNKSSLYLKPEIDCSISSEENTDDNITVQGEIMKEEGEDNLGNHDSSLAQPASDSSSSPPESHWEEGQEIIPTFFSTMNTSFSDIELLEDSGIPTEAFLASCYAVVPVLDKLGPTVFAPVKMDLVGNIKKVNQKYITNKEEFTTLQKIVLHEVEADVAQVRNSATEALLWLKRGLKFLKGFLTEVKNGEKDIQTALNNAYGKTLRQHHGWVVRGVFALALRAAPSYEDFVAALTIKEGDHQKAAFSVGMQRDLSLYLPAMEKQLAILDTLYEVHGLESDEVV.

Positions 1–93 (MEGVLYKWTN…WLVALGSAKA (93 aa)) constitute a PH domain. Thr139 is subject to Phosphothreonine. Residue Ser145 is modified to Phosphoserine. Thr153 carries the phosphothreonine modification. The segment at 274-302 (GEDNLGNHDSSLAQPASDSSSSPPESHWE) is disordered. The segment covering 282 to 298 (DSSLAQPASDSSSSPPE) has biased composition (low complexity). The tract at residues 310-519 (TFFSTMNTSF…VHGLESDEVV (210 aa)) is glycolipid transfer protein homology domain.

Homodimer. Interacts with ARF1; the interaction together with phosphatidylinositol 4-phosphate binding is required for FAPP2 GlcCer transfer ability.

The protein localises to the golgi apparatus. It is found in the trans-Golgi network membrane. Its subcellular location is the membrane. In terms of biological role, cargo transport protein that is required for apical transport from the trans-Golgi network (TGN). Transports AQP2 from the trans-Golgi network (TGN) to sites of AQP2 phosphorylation. Mediates the non-vesicular transport of glucosylceramide (GlcCer) from the trans-Golgi network (TGN) to the plasma membrane and plays a pivotal role in the synthesis of complex glycosphingolipids. Binding of both phosphatidylinositol 4-phosphate (PIP) and ARF1 are essential for the GlcCer transfer ability. Also required for primary cilium formation, possibly by being involved in the transport of raft lipids to the apical membrane, and for membrane tubulation. This is Pleckstrin homology domain-containing family A member 8 (PLEKHA8) from Canis lupus familiaris (Dog).